A 1343-amino-acid polypeptide reads, in one-letter code: DNA-directed RNA polymerase subunit beta (1343 aa).

This sequence belongs to the RNA polymerase beta chain family. The RNAP catalytic core consists of 2 alpha, 1 beta, 1 beta' and 1 omega subunit. When a sigma factor is associated with the core the holoenzyme is formed, which can initiate transcription.

The enzyme catalyses RNA(n) + a ribonucleoside 5'-triphosphate = RNA(n+1) + diphosphate. In terms of biological role, DNA-dependent RNA polymerase catalyzes the transcription of DNA into RNA using the four ribonucleoside triphosphates as substrates. This chain is DNA-directed RNA polymerase subunit beta, found in Shewanella baltica (strain OS155 / ATCC BAA-1091).